A 100-amino-acid polypeptide reads, in one-letter code: NADH-quinone oxidoreductase subunit K 2 (100 aa).

The next 3 helical transmembrane spans lie at 4-24, 28-48, and 60-80; these read LWWHISLGVALFVIGAAGVLL, ILVVLMSLELLLNSVNINFIA, and IFAIFVIAITAAEVAVALGIL.

The protein belongs to the complex I subunit 4L family. As to quaternary structure, NDH-1 is composed of 14 different subunits. Subunits NuoA, H, J, K, L, M, N constitute the membrane sector of the complex.

It is found in the cell inner membrane. The enzyme catalyses a quinone + NADH + 5 H(+)(in) = a quinol + NAD(+) + 4 H(+)(out). Its function is as follows. NDH-1 shuttles electrons from NADH, via FMN and iron-sulfur (Fe-S) centers, to quinones in the respiratory chain. The immediate electron acceptor for the enzyme in this species is believed to be ubiquinone. Couples the redox reaction to proton translocation (for every two electrons transferred, four hydrogen ions are translocated across the cytoplasmic membrane), and thus conserves the redox energy in a proton gradient. This is NADH-quinone oxidoreductase subunit K 2 from Sinorhizobium fredii (strain NBRC 101917 / NGR234).